We begin with the raw amino-acid sequence, 269 residues long: GTP cyclohydrolase FolE2 (269 aa).

The protein belongs to the GTP cyclohydrolase IV family.

The enzyme catalyses GTP + H2O = 7,8-dihydroneopterin 3'-triphosphate + formate + H(+). Its pathway is cofactor biosynthesis; 7,8-dihydroneopterin triphosphate biosynthesis; 7,8-dihydroneopterin triphosphate from GTP: step 1/1. In terms of biological role, converts GTP to 7,8-dihydroneopterin triphosphate. The protein is GTP cyclohydrolase FolE2 of Burkholderia vietnamiensis (strain G4 / LMG 22486) (Burkholderia cepacia (strain R1808)).